A 90-amino-acid polypeptide reads, in one-letter code: Small ribosomal subunit protein uS15 (90 aa).

It belongs to the universal ribosomal protein uS15 family. In terms of assembly, part of the 30S ribosomal subunit. Forms a bridge to the 50S subunit in the 70S ribosome, contacting the 23S rRNA.

One of the primary rRNA binding proteins, it binds directly to 16S rRNA where it helps nucleate assembly of the platform of the 30S subunit by binding and bridging several RNA helices of the 16S rRNA. Functionally, forms an intersubunit bridge (bridge B4) with the 23S rRNA of the 50S subunit in the ribosome. In Thermotoga maritima (strain ATCC 43589 / DSM 3109 / JCM 10099 / NBRC 100826 / MSB8), this protein is Small ribosomal subunit protein uS15.